The following is a 418-amino-acid chain: Protein-lysine 6-oxidase (418 aa).

A signal peptide spans 1 to 20; it reads MRFAWTALLGSLQLCALVRC. Positions 21–169 are cleaved as a propeptide — removed by BMP1; the sequence is APPAASHRQP…NRVEVDGMVG (149 aa). The segment at 63-84 is disordered; it reads YQPQRRRDPGATAPGAANATAP. The segment covering 72-84 has biased composition (low complexity); it reads GATAPGAANATAP. Residues Asn-80, Asn-96, and Asn-143 are each glycosylated (N-linked (GlcNAc...) asparagine). The segment at 130-175 is disordered; it reads TSGAHDAGTSRADNQTAPGEVPTLSNLRPPNRVEVDGMVGDDPYNP. Residues 140-157 are compositionally biased toward polar residues; the sequence is RADNQTAPGEVPTLSNLR. The residue at position 188 (Tyr-188) is a Sulfotyrosine. Residues 214-418 are lysyl-oxidase like; that stretch reads PDLVPDPYYI…YASGCTISPY (205 aa). 5 cysteine pairs are disulfide-bonded: Cys-239-Cys-245, Cys-292-Cys-341, Cys-325-Cys-331, Cys-352-Cys-362, and Cys-399-Cys-413. 3 residues coordinate Cu cation: His-293, His-295, and His-297. A cross-link (lysine tyrosylquinone (Lys-Tyr)) is located at residues 321–356; it reads KASFCLEDTSCDYGYHRRFACTAHTQGLSPGCYDTY. Tyr-356 bears the 2',4',5'-topaquinone mark.

It belongs to the lysyl oxidase family. Interacts with MFAP4. Interacts (via propeptide) with EFEMP2; this interaction is strong and facilitates formation of ternary complexes with ELN during elastic fiber assembly; this interaction limits interaction of EFEMP2 with FBLN5. It depends on Cu cation as a cofactor. Requires lysine tyrosylquinone residue as cofactor. Post-translationally, the lysine tyrosylquinone cross-link (LTQ) is generated by condensation of the epsilon-amino group of a lysine with a topaquinone produced by oxidation of tyrosine. In terms of processing, proteolytically cleaved by BMP1 which removes the propeptide. Also proteolytically cleaved by ADAMTS2 and ADAMTS14, but not by ADAMTS3, at an additional cleavage site downstream of the BMP1 cleavage site. The propeptide plays a role in directing the deposition of this enzyme to elastic fibers, via interaction with tropoelastin. Cleavage by BMP1 to remove the propeptide does not increase enzymatic activity but increases binding to collagen. Cleavage by ADAMTS2 produces a form with reduced collagen-binding activity. Sulfated at Tyr-188 and also at either Tyr-184 or Tyr-185 which enhances binding to collagen.

It is found in the secreted. The protein resides in the extracellular space. It catalyses the reaction L-lysyl-[protein] + O2 + H2O = (S)-2-amino-6-oxohexanoyl-[protein] + H2O2 + NH4(+). Functionally, responsible for the post-translational oxidative deamination of peptidyl lysine residues in precursors to fibrous collagen and elastin. Regulator of Ras expression. May play a role in tumor suppression. Plays a role in the aortic wall architecture. The polypeptide is Protein-lysine 6-oxidase (Bos taurus (Bovine)).